Consider the following 338-residue polypeptide: Ketol-acid reductoisomerase (NADP(+)) (338 aa).

In terms of domain architecture, KARI N-terminal Rossmann spans 1–181 (MKVYYDKDCD…GGGRTGIIET (181 aa)). NADP(+)-binding positions include 24-27 (YGSQ), R47, S50, S52, and 82-85 (DEFQ). Residue H107 is part of the active site. NADP(+) is bound at residue G133. Residues 182–327 (TFKDETETDL…EKLRTMMPWI (146 aa)) form the KARI C-terminal knotted domain. Positions 190, 194, 226, and 230 each coordinate Mg(2+). Substrate is bound at residue S251.

Belongs to the ketol-acid reductoisomerase family. Requires Mg(2+) as cofactor.

The catalysed reaction is (2R)-2,3-dihydroxy-3-methylbutanoate + NADP(+) = (2S)-2-acetolactate + NADPH + H(+). It carries out the reaction (2R,3R)-2,3-dihydroxy-3-methylpentanoate + NADP(+) = (S)-2-ethyl-2-hydroxy-3-oxobutanoate + NADPH + H(+). Its pathway is amino-acid biosynthesis; L-isoleucine biosynthesis; L-isoleucine from 2-oxobutanoate: step 2/4. It participates in amino-acid biosynthesis; L-valine biosynthesis; L-valine from pyruvate: step 2/4. Involved in the biosynthesis of branched-chain amino acids (BCAA). Catalyzes an alkyl-migration followed by a ketol-acid reduction of (S)-2-acetolactate (S2AL) to yield (R)-2,3-dihydroxy-isovalerate. In the isomerase reaction, S2AL is rearranged via a Mg-dependent methyl migration to produce 3-hydroxy-3-methyl-2-ketobutyrate (HMKB). In the reductase reaction, this 2-ketoacid undergoes a metal-dependent reduction by NADPH to yield (R)-2,3-dihydroxy-isovalerate. This is Ketol-acid reductoisomerase (NADP(+)) from Azotobacter vinelandii (strain DJ / ATCC BAA-1303).